Consider the following 172-residue polypeptide: Large ribosomal subunit protein uL10 (172 aa).

This sequence belongs to the universal ribosomal protein uL10 family. In terms of assembly, part of the ribosomal stalk of the 50S ribosomal subunit. The N-terminus interacts with L11 and the large rRNA to form the base of the stalk. The C-terminus forms an elongated spine to which L12 dimers bind in a sequential fashion forming a multimeric L10(L12)X complex.

Forms part of the ribosomal stalk, playing a central role in the interaction of the ribosome with GTP-bound translation factors. The sequence is that of Large ribosomal subunit protein uL10 from Chlorobium phaeovibrioides (strain DSM 265 / 1930) (Prosthecochloris vibrioformis (strain DSM 265)).